Here is a 168-residue protein sequence, read N- to C-terminus: uncharacterized protein (168 aa).

Over residues 1–15 the composition is skewed to basic and acidic residues; sequence MKEASDREEAPKMVE. Positions 1 to 36 are disordered; the sequence is MKEASDREEAPKMVEKNYSTGFRKAHGEKDQSVTKP.

It is found in the cytoplasm. This is an uncharacterized protein from Saccharomyces cerevisiae (strain ATCC 204508 / S288c) (Baker's yeast).